Here is a 509-residue protein sequence, read N- to C-terminus: MTIHVKNNIHWVGQRDWEVRDFHGTEYKTLQGSSYNSYLIREEKTVLIDTVDHKFSREFVQNLMAEVDLNTIDYIVINHAEEDHAGALSELMARIPNTPIYCTYNAIDSITGHHHHPEWNFHTVKTGDTLDIGNGKQLIFIETPMLHWPDSMMTYMTEDAVLFSNDAFGQHYCDEHLFNDEVDQTELFEQCQRYFANILTPFSRLVTAKIHEVLGFNLPLSMVATSHGVVWRDDPAQIIHLYLKWADSYQEDRITLFYDTMSNNTRMMADAIAQGINDVDPGVAVKIYNVARHDKNEILTQVFRSKGVLVGSSTMNNVMMPKVAAMLEEITGLRFQNKKASAFGSYGWNGGAVDRVQTRLMDAGFETTLALKTKWRPDGSALEVCREHGREIARQWALHPLDNTPARRVISPVKPAATAPQVTTAAQPMSASAESACGCNEVAAPQSATQPTVQSESGCMQCSVCQWIYDPALGEPMQDVTPGTMWSDVPDSFLCPECGLGKDVFNPIR.

The segment at 30–210 is zinc metallo-hydrolase; that stretch reads LQGSSYNSYL…PFSRLVTAKI (181 aa). Fe cation contacts are provided by histidine 79, glutamate 81, aspartate 83, histidine 147, aspartate 166, and histidine 227. The region spanning 254 to 393 is the Flavodoxin-like domain; sequence ITLFYDTMSN…VCREHGREIA (140 aa). FMN is bound by residues 260 to 264 and 342 to 369; these read TMSNN and AFGSYGWNGGAVDRVQTRLMDAGFETTL. Positions 457-508 constitute a Rubredoxin-like domain; that stretch reads SGCMQCSVCQWIYDPALGEPMQDVTPGTMWSDVPDSFLCPECGLGKDVFNPI. Residues cysteine 462, cysteine 465, cysteine 495, and cysteine 498 each coordinate Fe cation.

It in the N-terminal section; belongs to the zinc metallo-hydrolase group 3 family. In terms of assembly, homotetramer. The cofactor is Fe cation. Requires FMN as cofactor.

Its subcellular location is the cytoplasm. Its pathway is nitrogen metabolism; nitric oxide reduction. Its function is as follows. Anaerobic nitric oxide reductase; uses NADH to detoxify nitric oxide (NO), protecting several 4Fe-4S NO-sensitive enzymes. Has at least 2 reductase partners, only one of which (NorW, flavorubredoxin reductase) has been identified. NO probably binds to the di-iron center; electrons enter from the NorW at rubredoxin and are transferred sequentially to the FMN center and the di-iron center. Also able to function as an aerobic oxygen reductase. The protein is Anaerobic nitric oxide reductase flavorubredoxin of Pectobacterium atrosepticum (strain SCRI 1043 / ATCC BAA-672) (Erwinia carotovora subsp. atroseptica).